Here is a 1939-residue protein sequence, read N- to C-terminus: Myosin-6 (1939 aa).

Residues 32 to 81 (DIRTECFVPDDKEEFVKAKILSREGGKVIAETENGKTVTVKEDQVLQQNP) form the Myosin N-terminal SH3-like domain. A Myosin motor domain is found at 85 to 780 (DKIEDMAMLT…LLGLLEEMRD (696 aa)). Lys-129 is modified (N6,N6,N6-trimethyllysine). 178–185 (GESGAGKT) provides a ligand contact to ATP. Thr-379 bears the Phosphothreonine mark. Residue Ser-417 is modified to Phosphoserine. 2 actin-binding regions span residues 657–679 (LNKLMTNLRTTHPHFVRCIIPNE) and 759–773 (KFGHTKVFFKAGLLG). Positions 783 to 812 (LSRIITRMQAQARGQLMRIEFKKIVERRDA) constitute an IQ domain. Residues 842 to 1939 (LKSAETEKEM…GAKQKMHDEE (1098 aa)) are a coiled coil. Ser-1139 carries the post-translational modification Phosphoserine. At Tyr-1261 the chain carries Phosphotyrosine. Ser-1271 is subject to Phosphoserine. Phosphothreonine occurs at positions 1277 and 1284. Residue Ser-1309 is modified to Phosphoserine. Tyr-1310 is modified (phosphotyrosine). Thr-1311 carries the phosphothreonine modification. Residue Ser-1512 is modified to Phosphoserine. Thr-1515 is modified (phosphothreonine). Basic and acidic residues-rich tracts occupy residues 1826 to 1837 (GELEAEQKRNAE) and 1925 to 1939 (KSRDIGAKQKMHDEE). 2 disordered regions span residues 1826 to 1849 (GELEAEQKRNAESVKGMRKSERRI) and 1909 to 1939 (EERADIAESQVNKLRAKSRDIGAKQKMHDEE).

This sequence belongs to the TRAFAC class myosin-kinesin ATPase superfamily. Myosin family. In terms of assembly, muscle myosin is a hexameric protein that consists of 2 heavy chain subunits (MHC), 2 alkali light chain subunits (MLC) and 2 regulatory light chain subunits (MLC-2).

The protein localises to the cytoplasm. It localises to the myofibril. Muscle contraction. The protein is Myosin-6 (MYH6) of Homo sapiens (Human).